We begin with the raw amino-acid sequence, 137 residues long: Large ribosomal subunit protein uL16 (137 aa).

Belongs to the universal ribosomal protein uL16 family. Part of the 50S ribosomal subunit.

Binds 23S rRNA and is also seen to make contacts with the A and possibly P site tRNAs. In Lactococcus lactis subsp. lactis (strain IL1403) (Streptococcus lactis), this protein is Large ribosomal subunit protein uL16.